The sequence spans 383 residues: Cathepsin D (383 aa).

Positions Met-1–Ala-18 are cleaved as a signal peptide. Residues Leu-19 to Asn-48 constitute a propeptide that is removed on maturation. In terms of domain architecture, Peptidase A1 spans Tyr-63–Ala-378. The active site involves Asp-81. Cysteines 94 and 101 form a disulfide. Asn-118 and Asn-238 each carry an N-linked (GlcNAc...) asparagine glycan. A disulfide bridge links Cys-259 with Cys-263. Asp-268 is a catalytic residue. A disulfide bond links Cys-302 and Cys-339. Asn-310 carries an N-linked (GlcNAc...) asparagine glycan.

Belongs to the peptidase A1 family. As to quaternary structure, monomer. In terms of processing, N-glycosylated on 2 out of the 3 potential sites. Glycans contain sulfated Mannose.

It localises to the lysosome. The protein resides in the secreted. It catalyses the reaction Specificity similar to, but narrower than, that of pepsin A. Does not cleave the 4-Gln-|-His-5 bond in B chain of insulin.. Functionally, protease that may act during cell growth and/or development. The chain is Cathepsin D (ctsD) from Dictyostelium discoideum (Social amoeba).